Consider the following 413-residue polypeptide: Ras association domain-containing protein 5 (413 aa).

Positions Met1–Pro105 are disordered. Residues Ala61–His74 show a composition bias toward basic and acidic residues. A Phorbol-ester/DAG-type zinc finger spans residues Gly117–Cys165. Ser177 and Ser274 each carry phosphoserine. A Ras-associating domain is found at Pro265 to Thr359. Phosphothreonine is present on Thr347. In terms of domain architecture, SARAH spans Asp361 to Ser408.

As to quaternary structure, interacts directly with activated HRAS; a RASSF5-STK4/MST1 complex probably associates with activated HRAS. Interacts with KRAS. Probably interacts with Ras-like GTPases RRAS, MRAS, RAP1B, RAP2A and RALA. Interacts with RRAS2. Can self-associate. Interacts with RSSF1 isoform A. The RSSF1 isoform A-RSSF5 heterodimer probably mediates the association of RSSF1 with HRAS. Isoform 2 interacts with activated RAP1A and ITGAL/LFA-1. Binds STK4/MST1, inhibiting STK4/MST1 autoactivation.

It is found in the cytoplasm. It localises to the cytoskeleton. Its function is as follows. Potential tumor suppressor. Seems to be involved in lymphocyte adhesion by linking RAP1A activation upon T-cell receptor or chemokine stimulation to integrin activation. Stimulates lymphocyte polarization and the patch-like distribution of ITGAL/LFA-1, resulting in an enhanced adhesion to ICAM1. Together with RAP1A may participate in regulation of microtubule growth. The association with activated RAP1A is required for directional movement of endothelial cells during wound healing. May be involved in regulation of Ras apoptotic function. The RASSF5-STK4/MST1 complex may mediate HRAS and KRAS induced apoptosis. This chain is Ras association domain-containing protein 5 (Rassf5), found in Rattus norvegicus (Rat).